Consider the following 134-residue polypeptide: Ribosome-binding factor A (134 aa).

The protein belongs to the RbfA family. As to quaternary structure, monomer. Binds 30S ribosomal subunits, but not 50S ribosomal subunits or 70S ribosomes.

It localises to the cytoplasm. Its function is as follows. One of several proteins that assist in the late maturation steps of the functional core of the 30S ribosomal subunit. Associates with free 30S ribosomal subunits (but not with 30S subunits that are part of 70S ribosomes or polysomes). Required for efficient processing of 16S rRNA. May interact with the 5'-terminal helix region of 16S rRNA. This chain is Ribosome-binding factor A, found in Bartonella bacilliformis (strain ATCC 35685 / KC583 / Herrer 020/F12,63).